A 451-amino-acid polypeptide reads, in one-letter code: UDP-N-acetylmuramoylalanine--D-glutamate ligase (451 aa).

An ATP-binding site is contributed by 119–125 (GSNGKTT).

It belongs to the MurCDEF family.

Its subcellular location is the cytoplasm. It carries out the reaction UDP-N-acetyl-alpha-D-muramoyl-L-alanine + D-glutamate + ATP = UDP-N-acetyl-alpha-D-muramoyl-L-alanyl-D-glutamate + ADP + phosphate + H(+). It functions in the pathway cell wall biogenesis; peptidoglycan biosynthesis. Cell wall formation. Catalyzes the addition of glutamate to the nucleotide precursor UDP-N-acetylmuramoyl-L-alanine (UMA). The polypeptide is UDP-N-acetylmuramoylalanine--D-glutamate ligase (Bacillus cytotoxicus (strain DSM 22905 / CIP 110041 / 391-98 / NVH 391-98)).